The sequence spans 67 residues: uncharacterized protein (67 aa).

This is an uncharacterized protein from Dictyostelium discoideum (Social amoeba).